A 437-amino-acid polypeptide reads, in one-letter code: Enolase (437 aa).

Gln166 is a (2R)-2-phosphoglycerate binding site. Catalysis depends on Glu208, which acts as the Proton donor. Residues Asp245, Glu295, and Asp322 each coordinate Mg(2+). (2R)-2-phosphoglycerate-binding residues include Lys347, Arg376, Ser377, and Lys398. The Proton acceptor role is filled by Lys347.

This sequence belongs to the enolase family. Mg(2+) is required as a cofactor.

It is found in the cytoplasm. The protein resides in the secreted. The protein localises to the cell surface. It catalyses the reaction (2R)-2-phosphoglycerate = phosphoenolpyruvate + H2O. It participates in carbohydrate degradation; glycolysis; pyruvate from D-glyceraldehyde 3-phosphate: step 4/5. Its function is as follows. Catalyzes the reversible conversion of 2-phosphoglycerate (2-PG) into phosphoenolpyruvate (PEP). It is essential for the degradation of carbohydrates via glycolysis. The protein is Enolase of Lachnoclostridium phytofermentans (strain ATCC 700394 / DSM 18823 / ISDg) (Clostridium phytofermentans).